Here is an 863-residue protein sequence, read N- to C-terminus: Glycogen phosphorylase (863 aa).

Residue Lys-618 is modified to N6-(pyridoxal phosphate)lysine.

This sequence belongs to the glycogen phosphorylase family. Pyridoxal 5'-phosphate serves as cofactor.

The catalysed reaction is [(1-&gt;4)-alpha-D-glucosyl](n) + phosphate = [(1-&gt;4)-alpha-D-glucosyl](n-1) + alpha-D-glucose 1-phosphate. Its function is as follows. Phosphorylase is an important allosteric enzyme in carbohydrate metabolism. Enzymes from different sources differ in their regulatory mechanisms and in their natural substrates. However, all known phosphorylases share catalytic and structural properties. In Mycobacterium tuberculosis (strain ATCC 25618 / H37Rv), this protein is Glycogen phosphorylase (glgP).